We begin with the raw amino-acid sequence, 223 residues long: MSPWEAKWIRHSEVRPFPQPEPITVEEKVAVMLKPEIHVKNGCHPYPAVNDLGETNSGLKTKGAPSGMCKGSGWGSQVYGRHALFKGVWAIMYSWYFPKDMPSTDFGHRHDWEHVIVWIEKPVVENVKILAVTPSAHDGYSKQVPPNPGHLNGLAAKINYESKWPINHALEPTGLGGEKQDLILWEQLSSNARHALNIVHWGDANTPFNDYVFMGKLEKAFPL.

Positions 90-100 (AIMYSWYFPKD) match the Conserved undecapeptide motif motif. The short motif at 107 to 113 (GHRHDWE) is the Conserved p motif element.

The protein belongs to the Necrosis inducing protein (NPP1) family.

Its subcellular location is the secreted. The protein localises to the host cytoplasm. In terms of biological role, probable secreted effector that may act as a pathogen-associated molecular pattern (PAMP) recognized by the plant immune system. Seems not to induce necrosis, neither in several susceptible or resistant Vitis species nor in the dicot model plant Nicotiana benthamiana. The chain is NLP effector protein 2 from Plasmopara viticola (Downy mildew of grapevine).